The primary structure comprises 292 residues: 4-hydroxy-tetrahydrodipicolinate synthase (292 aa).

Residue Thr-45 participates in pyruvate binding. The Proton donor/acceptor role is filled by Tyr-133. The active-site Schiff-base intermediate with substrate is Lys-161. A pyruvate-binding site is contributed by Ile-203.

The protein belongs to the DapA family. Homotetramer; dimer of dimers.

The protein resides in the cytoplasm. The enzyme catalyses L-aspartate 4-semialdehyde + pyruvate = (2S,4S)-4-hydroxy-2,3,4,5-tetrahydrodipicolinate + H2O + H(+). Its pathway is amino-acid biosynthesis; L-lysine biosynthesis via DAP pathway; (S)-tetrahydrodipicolinate from L-aspartate: step 3/4. Functionally, catalyzes the condensation of (S)-aspartate-beta-semialdehyde [(S)-ASA] and pyruvate to 4-hydroxy-tetrahydrodipicolinate (HTPA). The sequence is that of 4-hydroxy-tetrahydrodipicolinate synthase from Erwinia tasmaniensis (strain DSM 17950 / CFBP 7177 / CIP 109463 / NCPPB 4357 / Et1/99).